The primary structure comprises 106 residues: Large ribosomal subunit protein eL42A (106 aa).

N6-methyllysine; by RKM3 is present on K40. An N6-methyllysine; by RKM4 modification is found at K55.

This sequence belongs to the eukaryotic ribosomal protein eL42 family. In terms of assembly, component of the large ribosomal subunit (LSU). Mature yeast ribosomes consist of a small (40S) and a large (60S) subunit. The 40S small subunit contains 1 molecule of ribosomal RNA (18S rRNA) and 33 different proteins (encoded by 57 genes). The large 60S subunit contains 3 rRNA molecules (25S, 5.8S and 5S rRNA) and 46 different proteins (encoded by 81 genes). In wild-type cells, 78% of L42 is monomethylated at both Lys-40 and Lys-55, and 22% are a mixture of species with either residue monomethylated.

It localises to the cytoplasm. Functionally, component of the ribosome, a large ribonucleoprotein complex responsible for the synthesis of proteins in the cell. The small ribosomal subunit (SSU) binds messenger RNAs (mRNAs) and translates the encoded message by selecting cognate aminoacyl-transfer RNA (tRNA) molecules. The large subunit (LSU) contains the ribosomal catalytic site termed the peptidyl transferase center (PTC), which catalyzes the formation of peptide bonds, thereby polymerizing the amino acids delivered by tRNAs into a polypeptide chain. The nascent polypeptides leave the ribosome through a tunnel in the LSU and interact with protein factors that function in enzymatic processing, targeting, and the membrane insertion of nascent chains at the exit of the ribosomal tunnel. This is Large ribosomal subunit protein eL42A from Saccharomyces cerevisiae (strain ATCC 204508 / S288c) (Baker's yeast).